Reading from the N-terminus, the 132-residue chain is Z-ring associated protein G (132 aa).

The chain crosses the membrane as a helical span at residues 1–21; that stretch reads MTWEYALIGLVVGIIIGAVAM. The segment at 95-132 is disordered; it reads FRNRLAESEASNDQAPVQMPRDYSEGASGLLRTGAKRD.

It belongs to the ZapG family.

Its subcellular location is the cell inner membrane. Functionally, involved in cell division, cell envelope biogenesis and cell shape maintenance. This Escherichia coli O157:H7 protein is Z-ring associated protein G.